Consider the following 127-residue polypeptide: Aspartate 1-decarboxylase (127 aa).

The Schiff-base intermediate with substrate; via pyruvic acid role is filled by Ser-25. Ser-25 carries the post-translational modification Pyruvic acid (Ser). Thr-57 provides a ligand contact to substrate. Catalysis depends on Tyr-58, which acts as the Proton donor. 73–75 (GAA) is a binding site for substrate.

It belongs to the PanD family. In terms of assembly, heterooctamer of four alpha and four beta subunits. The cofactor is pyruvate. Is synthesized initially as an inactive proenzyme, which is activated by self-cleavage at a specific serine bond to produce a beta-subunit with a hydroxyl group at its C-terminus and an alpha-subunit with a pyruvoyl group at its N-terminus.

Its subcellular location is the cytoplasm. The enzyme catalyses L-aspartate + H(+) = beta-alanine + CO2. It functions in the pathway cofactor biosynthesis; (R)-pantothenate biosynthesis; beta-alanine from L-aspartate: step 1/1. Its function is as follows. Catalyzes the pyruvoyl-dependent decarboxylation of aspartate to produce beta-alanine. The sequence is that of Aspartate 1-decarboxylase from Neisseria meningitidis serogroup B (strain ATCC BAA-335 / MC58).